Here is a 402-residue protein sequence, read N- to C-terminus: Septin CDC11 (402 aa).

Met-1 carries the N-acetylmethionine modification. Ser-4 carries the phosphoserine modification. Positions 14–21 match the Basic motif motif; it reads RKRKTLKK. Residues 21-307 enclose the Septin-type G domain; that stretch reads KSINFSIMII…ENYRTEALSG (287 aa). The G1 motif stretch occupies residues 31-38; the sequence is GESGSGRS. 31–38 is a GTP binding site; the sequence is GESGSGRS. The interval 89 to 92 is G3 motif; that stretch reads DTPN. A G4 motif region spans residues 171–174; sequence SKAD. GTP-binding positions include 172–180 and Gly-233; that span reads KADSLTPKE. The stretch at 318–376 forms a coiled coil; that stretch reads AKQEISESDYLMKEEQIKLEEERLRKFEERVHQDLINKRKELLERENELKEIEKRLLAE. The residue at position 394 (Ser-394) is a Phosphoserine; by CDC28. Ser-395 carries the post-translational modification Phosphoserine; by GIN4.

Belongs to the TRAFAC class TrmE-Era-EngA-EngB-Septin-like GTPase superfamily. Septin GTPase family. Component of the septin complex which consists of CDC3, CDC10, CDC11, CDC12 and probably SEP7. The purified septin complex appeared to have a stoichiometry of 2 CDC3, 1 to 2 CDC10, 1 CDC11, 2 CDC12, and 1 or none SEP7 subunit. Interacts with HSL1. In terms of processing, hyphal induction causes immediate phosphorylation at Ser-395 by GIN4 and at Ser-394 by CDC28-CCN1. GIN4 phosphorylation at Ser-395 primes CDC11 for further phosphorylation by CDC28-CCN1. CDC28-HGC1 then maintains CDC11 phosphorylation throughout hyphal growth. Ser-4 is also phosphorylated in yeast cells but not hyphal cells. Met-1 is acetylated.

Its subcellular location is the bud neck. Septins are GTPases involved in cytokinesis that assemble early in the cell cycle as a patch at the incipient bud site and form a ring before bud emergence, which transforms into an hour-glass shaped collar of cortical filaments that spans both sides of the mother-bud neck. This collar persists until just before cytokinesis, when it splits into two rings that occupy opposite sides of the neck. The septins at the bud neck serve as a structural scaffold that recruits different components involved in diverse processes at specific stages during the cell cycle. Many proteins bind asymmetrically to the septin collar. The septin assembly is regulated by protein kinase GIN4. Septins are also involved in cell morphogenesis, chlamydospores morphogenesis, bud site selection, chitin deposition, cell cycle regulation, cell compartmentalization, and spore wall formation. CDC11 is required for the correct localization of SEC3 at bud tips and bud necks. Plays a key role in invasive growth and virulence. The sequence is that of Septin CDC11 (CDC11) from Candida albicans (strain SC5314 / ATCC MYA-2876) (Yeast).